The chain runs to 276 residues: Outer plastidial membrane protein porin (276 aa).

The protein belongs to the eukaryotic mitochondrial porin (TC 1.B.8.1) family.

Its subcellular location is the plastid outer membrane. Its function is as follows. Forms a channel through the cell membrane that allows diffusion of small hydrophilic molecules. The channel adopts an open conformation at low or zero membrane potential and a closed conformation at potentials above 30-40 mV. The open state has a weak anion selectivity whereas the closed state is cation-selective. This chain is Outer plastidial membrane protein porin (POR1), found in Pisum sativum (Garden pea).